Consider the following 415-residue polypeptide: uncharacterized protein (415 aa).

[4Fe-4S] cluster contacts are provided by Cys-85, Cys-91, Cys-94, and Cys-175. S-adenosyl-L-methionine-binding residues include Gln-248, Tyr-276, Glu-297, and Asn-344. The Nucleophile role is filled by Cys-371.

The protein belongs to the class I-like SAM-binding methyltransferase superfamily. RNA M5U methyltransferase family.

This is an uncharacterized protein from Leptospira interrogans serogroup Icterohaemorrhagiae serovar copenhageni (strain Fiocruz L1-130).